The sequence spans 822 residues: Coiled-coil domain-containing protein 175 (822 aa).

Coiled-coil stretches lie at residues 129–164 (IIEISQIKRKIETMNNEVKFLTNKISELKSMNEVLG), 223–397 (IEKQ…KQMM), and 510–537 (HLIETLKEQLAQDKKDYVKKEERLIEEL).

This is Coiled-coil domain-containing protein 175 (Ccdc175) from Mus musculus (Mouse).